Reading from the N-terminus, the 223-residue chain is Crossover junction endodeoxyribonuclease RuvC (223 aa).

Catalysis depends on residues D12, E73, and D146. Mg(2+) contacts are provided by D12, E73, and D146. A disordered region spans residues 182–223 (QGKLGKAKSTLNARNNAQVTGDAQVRAGHPSQFERPDRADPR). A compositionally biased stretch (polar residues) spans 190-202 (STLNARNNAQVTG). The span at 213–223 (QFERPDRADPR) shows a compositional bias: basic and acidic residues.

It belongs to the RuvC family. Homodimer which binds Holliday junction (HJ) DNA. The HJ becomes 2-fold symmetrical on binding to RuvC with unstacked arms; it has a different conformation from HJ DNA in complex with RuvA. In the full resolvosome a probable DNA-RuvA(4)-RuvB(12)-RuvC(2) complex forms which resolves the HJ. The cofactor is Mg(2+).

The protein resides in the cytoplasm. It carries out the reaction Endonucleolytic cleavage at a junction such as a reciprocal single-stranded crossover between two homologous DNA duplexes (Holliday junction).. Its function is as follows. The RuvA-RuvB-RuvC complex processes Holliday junction (HJ) DNA during genetic recombination and DNA repair. Endonuclease that resolves HJ intermediates. Cleaves cruciform DNA by making single-stranded nicks across the HJ at symmetrical positions within the homologous arms, yielding a 5'-phosphate and a 3'-hydroxyl group; requires a central core of homology in the junction. The consensus cleavage sequence is 5'-(A/T)TT(C/G)-3'. Cleavage occurs on the 3'-side of the TT dinucleotide at the point of strand exchange. HJ branch migration catalyzed by RuvA-RuvB allows RuvC to scan DNA until it finds its consensus sequence, where it cleaves and resolves the cruciform DNA. This Corynebacterium efficiens (strain DSM 44549 / YS-314 / AJ 12310 / JCM 11189 / NBRC 100395) protein is Crossover junction endodeoxyribonuclease RuvC.